The following is a 205-amino-acid chain: uncharacterized protein (205 aa).

Catalysis depends on charge relay system residues serine 119 and histidine 160.

It belongs to the peptidase S51 family.

This is an uncharacterized protein from Listeria monocytogenes serovar 1/2a (strain ATCC BAA-679 / EGD-e).